A 257-amino-acid chain; its full sequence is Ribonuclease HII (257 aa).

The RNase H type-2 domain occupies 70–257 (EFIAGIDEVG…PIKSMVAGGN (188 aa)). A divalent metal cation-binding residues include Asp-76, Glu-77, and Asp-168.

The protein belongs to the RNase HII family. The cofactor is Mn(2+). Mg(2+) is required as a cofactor.

Its subcellular location is the cytoplasm. It catalyses the reaction Endonucleolytic cleavage to 5'-phosphomonoester.. Functionally, endonuclease that specifically degrades the RNA of RNA-DNA hybrids. In Streptococcus suis (strain 98HAH33), this protein is Ribonuclease HII.